We begin with the raw amino-acid sequence, 553 residues long: Hydroxylamine reductase (553 aa).

4 residues coordinate [2Fe-2S] cluster: cysteine 3, cysteine 6, cysteine 18, and cysteine 25. Residues histidine 249, glutamate 273, cysteine 317, cysteine 405, cysteine 433, cysteine 459, glutamate 493, and lysine 495 each coordinate hybrid [4Fe-2O-2S] cluster. Cysteine 405 bears the Cysteine persulfide mark.

This sequence belongs to the HCP family. [2Fe-2S] cluster is required as a cofactor. The cofactor is hybrid [4Fe-2O-2S] cluster.

It is found in the cytoplasm. The catalysed reaction is A + NH4(+) + H2O = hydroxylamine + AH2 + H(+). Catalyzes the reduction of hydroxylamine to form NH(3) and H(2)O. This chain is Hydroxylamine reductase, found in Actinobacillus succinogenes (strain ATCC 55618 / DSM 22257 / CCUG 43843 / 130Z).